Consider the following 158-residue polypeptide: Protein OPG060 (158 aa).

The protein belongs to the orthopoxvirus OPG058 family.

The sequence is that of Protein OPG060 (OPG060) from Cynomys gunnisoni (Gunnison's prairie dog).